Reading from the N-terminus, the 468-residue chain is MRKWYFILLAGVLTSVILAFVYDKTKANEEGSGDYLYVSPNGSDQNEGTKEKPFRTLAHASEKAAAGTTVMIREGTYHETLDVKHSGTDGKPITFRNYENENVVISGESVANAEYETPLIRIHDKHDIAISGLTIQDLSVSSEEATAIGIYVSGSSSHIAIKDNHIRGIKTTADEGNAHGIAVYGTGSMKDIRIEDNTVEKLTLGASEAVVLNGNIDGFTVAGNVVRNNNNIGIDLIGYEGTADKNDYVRNGVVENNTVYQNSTYGNPAYGDEYSAGGIYVDGGHDIEIKNNTVYDNDIGIEATSEHKGKYANAIQITDNKVYNNAYTGISIGGYDKKRGGTSNSLIARNIMYRNDTKGLYGGQLLLQYDTKNNTIEKNILTAGDSRLFIGNDFTENEGNTVNHNVYHKEADQDGIWMWKKKEYDSFSSYRKATKNDQQSIYADPMFRDEASYDFSLDPDSPARPVIE.

A signal peptide spans 1–27; sequence MRKWYFILLAGVLTSVILAFVYDKTKA. PbH1 repeat units follow at residues 125–154, 156–185, 189–214, 216–238, 249–283, 284–305, 312–334, and 397–420; these read KHDI…YVSG, SSHI…AVYG, MKDI…VLNG, IDGF…DLIG, VRNG…YVDG, GHDI…EATS, ANAI…SIGG, and NEGN…WMWK.

It is found in the secreted. This is an uncharacterized protein from Bacillus subtilis (strain 168).